A 151-amino-acid polypeptide reads, in one-letter code: Ribosome maturation factor RimP (151 aa).

Belongs to the RimP family.

The protein resides in the cytoplasm. Functionally, required for maturation of 30S ribosomal subunits. This is Ribosome maturation factor RimP from Mannheimia succiniciproducens (strain KCTC 0769BP / MBEL55E).